The following is a 123-amino-acid chain: Large ribosomal subunit protein uL24 (123 aa).

Residues 100–123 are disordered; that stretch reads RRPDGSTYKAERSVRISRKTGKEI.

The protein belongs to the universal ribosomal protein uL24 family. As to quaternary structure, part of the 50S ribosomal subunit.

Functionally, one of two assembly initiator proteins, it binds directly to the 5'-end of the 23S rRNA, where it nucleates assembly of the 50S subunit. One of the proteins that surrounds the polypeptide exit tunnel on the outside of the subunit. This chain is Large ribosomal subunit protein uL24, found in Nocardioides sp. (strain ATCC BAA-499 / JS614).